The following is a 380-amino-acid chain: Cell division protein ZipA (380 aa).

The Periplasmic portion of the chain corresponds to 1–7 (MEDNFRN). Residues 8–28 (VLIILSAIVITAIFIHGLWTL) form a helical membrane-spanning segment. The Cytoplasmic portion of the chain corresponds to 29 to 380 (RKQKNPYKLK…DRKSRIALVE (352 aa)).

This sequence belongs to the ZipA family. As to quaternary structure, interacts with FtsZ via their C-terminal domains.

Its subcellular location is the cell inner membrane. Essential cell division protein that stabilizes the FtsZ protofilaments by cross-linking them and that serves as a cytoplasmic membrane anchor for the Z ring. Also required for the recruitment to the septal ring of downstream cell division proteins. The polypeptide is Cell division protein ZipA (Colwellia psychrerythraea (strain 34H / ATCC BAA-681) (Vibrio psychroerythus)).